A 122-amino-acid polypeptide reads, in one-letter code: Large ribosomal subunit protein uL14 (122 aa).

It belongs to the universal ribosomal protein uL14 family. As to quaternary structure, part of the 50S ribosomal subunit. Forms a cluster with proteins L3 and L19. In the 70S ribosome, L14 and L19 interact and together make contacts with the 16S rRNA in bridges B5 and B8.

In terms of biological role, binds to 23S rRNA. Forms part of two intersubunit bridges in the 70S ribosome. This Paenarthrobacter aurescens (strain TC1) protein is Large ribosomal subunit protein uL14.